The following is a 511-amino-acid chain: ATP synthase subunit alpha (511 aa).

Residue 169–176 (GDRQTGKT) coordinates ATP.

The protein belongs to the ATPase alpha/beta chains family. As to quaternary structure, F-type ATPases have 2 components, CF(1) - the catalytic core - and CF(0) - the membrane proton channel. CF(1) has five subunits: alpha(3), beta(3), gamma(1), delta(1), epsilon(1). CF(0) has three main subunits: a(1), b(2) and c(9-12). The alpha and beta chains form an alternating ring which encloses part of the gamma chain. CF(1) is attached to CF(0) by a central stalk formed by the gamma and epsilon chains, while a peripheral stalk is formed by the delta and b chains.

It is found in the cell inner membrane. The catalysed reaction is ATP + H2O + 4 H(+)(in) = ADP + phosphate + 5 H(+)(out). In terms of biological role, produces ATP from ADP in the presence of a proton gradient across the membrane. The alpha chain is a regulatory subunit. This Bartonella henselae (strain ATCC 49882 / DSM 28221 / CCUG 30454 / Houston 1) (Rochalimaea henselae) protein is ATP synthase subunit alpha.